The sequence spans 460 residues: Cysteine--tRNA ligase (460 aa).

Cys28 contributes to the Zn(2+) binding site. Positions 30–40 match the 'HIGH' region motif; sequence MTVYDYCHLGH. Positions 209, 234, and 238 each coordinate Zn(2+). The 'KMSKS' region motif lies at 266 to 270; the sequence is KMSKS. Lys269 contributes to the ATP binding site.

Belongs to the class-I aminoacyl-tRNA synthetase family. Monomer. It depends on Zn(2+) as a cofactor.

Its subcellular location is the cytoplasm. The catalysed reaction is tRNA(Cys) + L-cysteine + ATP = L-cysteinyl-tRNA(Cys) + AMP + diphosphate. This Thioalkalivibrio sulfidiphilus (strain HL-EbGR7) protein is Cysteine--tRNA ligase.